A 525-amino-acid polypeptide reads, in one-letter code: GMP synthase [glutamine-hydrolyzing] (525 aa).

Residues R9–L207 form the Glutamine amidotransferase type-1 domain. Catalysis depends on C86, which acts as the Nucleophile. Catalysis depends on residues H181 and E183. The region spanning W208 to R400 is the GMPS ATP-PPase domain. Position 235-241 (S235–S241) interacts with ATP.

In terms of assembly, homodimer.

The enzyme catalyses XMP + L-glutamine + ATP + H2O = GMP + L-glutamate + AMP + diphosphate + 2 H(+). It functions in the pathway purine metabolism; GMP biosynthesis; GMP from XMP (L-Gln route): step 1/1. Catalyzes the synthesis of GMP from XMP. This is GMP synthase [glutamine-hydrolyzing] from Shigella boydii serotype 4 (strain Sb227).